Reading from the N-terminus, the 972-residue chain is MPFTLGQRWISDTESDLGLGTVVAEDKRTVSIMFSACEESRLYARSDAPVTRVMFNVGDVVESHEGWSLEVKIVEENGGIFTYIGTRTDTEEENVKLREIFLSHQIRFNKPQDKLFAGQIDRMDRFALRYRALTNQYEQHKSPLRGLCGMRAGLIPHQLFIAHEVGRRYAPRVLLADEVGLGKTIEAGMIIHQQVLAGRAERILIVVPETLQHQWLVEMMRRFNLHFSIFDEERCVESLADATNPFETAQYVLCSLDFLRKSRRRFEQAQDADWDLLVVDEAHHLEWSEDKPSRQYQVVEALAEATPGVLLLTATPEQLGRESHFARLRLLDPDRFYDYDTFVEEERQYAPVAEAVTRLLSGEKIDDNARKTLVDLLSEQDIEPKLRLIESSDADDEHAQTVRHELIDSLMDRHGTGRVLFRNTRAAIKGFPERHLNMYPLELPSQYKTAMRVSSMMSGSISAEQKAIKLLYPEDIYQEFEGESATWWNFDPRVNWLLEMLKANRNEKVLVICSRAQTALTLEQALREREGIRATVFHEGMSIIDRDKAAAYFAQEDDGAQVLLCSEIGSEGRNFQFSNQLVMFDLPNNPDLLEQRIGRLDRIGQQRDIEIHVPHLEGTSQALLAHWYNEGLNSFEETCPTGRAVYEAVSDDLIALLACEKHEPEALENLIEKSAAMHHELKAKLDQGRDRLLEIHSNGGNAANDLVTQISSKDGDTNLIAFSLGLFDTIGLNQDDKGENAIVVTPSEHMMVASYPGLPYDGCTITFDRETALSREDLHFISWEHPMIQGGIDLLLSEGVGATAVSLLKNKALPAGTLLLEMVYVVDAQAPKSSGIGRFLPKTPIRILLDAKGNNLSNKVAFEGFNRQLSPVNRHLASKLVNSVQKEIHVLIAQAEQEVAKELVTVRESAQTEMENSLQAELTRLQALKAVNPNIRDDELELIESQIQDLTGYIGKAQIQLDSLRLIVVSHN.

One can recognise a Helicase ATP-binding domain in the interval 164 to 334; it reads EVGRRYAPRV…FARLRLLDPD (171 aa). Residue 177-184 coordinates ATP; sequence DEVGLGKT. Positions 280-283 match the DEAH box motif; it reads DEAH. Residues 493–671 enclose the Helicase C-terminal domain; that stretch reads RVNWLLEMLK…HEPEALENLI (179 aa).

It belongs to the SNF2/RAD54 helicase family. RapA subfamily. In terms of assembly, interacts with the RNAP. Has a higher affinity for the core RNAP than for the holoenzyme. Its ATPase activity is stimulated by binding to RNAP.

Its function is as follows. Transcription regulator that activates transcription by stimulating RNA polymerase (RNAP) recycling in case of stress conditions such as supercoiled DNA or high salt concentrations. Probably acts by releasing the RNAP, when it is trapped or immobilized on tightly supercoiled DNA. Does not activate transcription on linear DNA. Probably not involved in DNA repair. In Photobacterium profundum (strain SS9), this protein is RNA polymerase-associated protein RapA.